Consider the following 552-residue polypeptide: N-acetylglucosamine-6-sulfatase (552 aa).

Positions 1–36 are cleaved as a signal peptide; sequence MRLLPLAPGRLRRGSPRHLPSCSPALLLLVLGGCLG. 3 residues coordinate Ca(2+): Asp-55, Asp-56, and Cys-91. Cys-91 (nucleophile) is an active-site residue. At Cys-91 the chain carries 3-oxoalanine (Cys). 7 N-linked (GlcNAc...) asparagine glycosylation sites follow: Asn-111, Asn-117, Asn-183, Asn-198, Asn-210, Asn-279, and Asn-317. Residues Asp-326 and Asn-327 each coordinate Ca(2+). Asn-362, Asn-387, Asn-405, Asn-422, Asn-449, and Asn-480 each carry an N-linked (GlcNAc...) asparagine glycan. Ser-541 carries the phosphoserine modification.

Belongs to the sulfatase family. It depends on Ca(2+) as a cofactor. In terms of processing, the form A (78 kDa) is processed by internal peptidase cleavage to a 32 kDa N-terminal species (form B) and a 48 kDa C-terminal species. The conversion to 3-oxoalanine (also known as C-formylglycine, FGly), of a serine or cysteine residue in prokaryotes and of a cysteine residue in eukaryotes, is critical for catalytic activity.

The protein localises to the lysosome. It catalyses the reaction Hydrolysis of the 6-sulfate groups of the N-acetyl-D-glucosamine 6-sulfate units of heparan sulfate and keratan sulfate.. Hydrolyzes 6-sulfate groups in N-acetyl-d-glucosaminide units of heparin sulfate and keratan sulfate. The polypeptide is N-acetylglucosamine-6-sulfatase (GNS) (Homo sapiens (Human)).